The primary structure comprises 228 residues: Cytochrome c oxidase subunit 2 (228 aa).

The Mitochondrial intermembrane portion of the chain corresponds to 1–26 (MSTWANLGLQDSASPLMEQLIFFHDH). The chain crosses the membrane as a helical span at residues 27-48 (ALLILVMITVLVGYLMFMLFFN). Over 49-62 (NYVNRFLLHGQLIE) the chain is Mitochondrial matrix. Residues 63–82 (MIWTILPAIILLFIALPSLR) form a helical membrane-spanning segment. Over 83-228 (LLYLLDEINE…FIKWISSNNS (146 aa)) the chain is Mitochondrial intermembrane. Residues His161, Cys196, Glu198, Cys200, His204, and Met207 each coordinate Cu cation. Mg(2+) is bound at residue Glu198.

It belongs to the cytochrome c oxidase subunit 2 family. In terms of assembly, component of the cytochrome c oxidase (complex IV, CIV), a multisubunit enzyme composed of a catalytic core of 3 subunits and several supernumerary subunits. The complex exists as a monomer or a dimer and forms supercomplexes (SCs) in the inner mitochondrial membrane with ubiquinol-cytochrome c oxidoreductase (cytochrome b-c1 complex, complex III, CIII). It depends on Cu cation as a cofactor.

It localises to the mitochondrion inner membrane. It carries out the reaction 4 Fe(II)-[cytochrome c] + O2 + 8 H(+)(in) = 4 Fe(III)-[cytochrome c] + 2 H2O + 4 H(+)(out). Functionally, component of the cytochrome c oxidase, the last enzyme in the mitochondrial electron transport chain which drives oxidative phosphorylation. The respiratory chain contains 3 multisubunit complexes succinate dehydrogenase (complex II, CII), ubiquinol-cytochrome c oxidoreductase (cytochrome b-c1 complex, complex III, CIII) and cytochrome c oxidase (complex IV, CIV), that cooperate to transfer electrons derived from NADH and succinate to molecular oxygen, creating an electrochemical gradient over the inner membrane that drives transmembrane transport and the ATP synthase. Cytochrome c oxidase is the component of the respiratory chain that catalyzes the reduction of oxygen to water. Electrons originating from reduced cytochrome c in the intermembrane space (IMS) are transferred via the dinuclear copper A center (CU(A)) of subunit 2 and heme A of subunit 1 to the active site in subunit 1, a binuclear center (BNC) formed by heme A3 and copper B (CU(B)). The BNC reduces molecular oxygen to 2 water molecules using 4 electrons from cytochrome c in the IMS and 4 protons from the mitochondrial matrix. The protein is Cytochrome c oxidase subunit 2 (mt:CoII) of Drosophila yakuba (Fruit fly).